The chain runs to 150 residues: Macrodomain Ter protein (150 aa).

Belongs to the MatP family. As to quaternary structure, homodimer.

It is found in the cytoplasm. Functionally, required for spatial organization of the terminus region of the chromosome (Ter macrodomain) during the cell cycle. Prevents early segregation of duplicated Ter macrodomains during cell division. Binds specifically to matS, which is a 13 bp signature motif repeated within the Ter macrodomain. The polypeptide is Macrodomain Ter protein (Salmonella typhi).